Reading from the N-terminus, the 141-residue chain is ATP synthase epsilon chain (141 aa).

Belongs to the ATPase epsilon chain family. As to quaternary structure, F-type ATPases have 2 components, CF(1) - the catalytic core - and CF(0) - the membrane proton channel. CF(1) has five subunits: alpha(3), beta(3), gamma(1), delta(1), epsilon(1). CF(0) has three main subunits: a, b and c.

It is found in the cell inner membrane. In terms of biological role, produces ATP from ADP in the presence of a proton gradient across the membrane. The chain is ATP synthase epsilon chain from Pseudomonas fluorescens (strain Pf0-1).